A 362-amino-acid chain; its full sequence is Histidinol-phosphate aminotransferase (362 aa).

Position 218 is an N6-(pyridoxal phosphate)lysine (Lys-218).

Belongs to the class-II pyridoxal-phosphate-dependent aminotransferase family. Histidinol-phosphate aminotransferase subfamily. Homodimer. Pyridoxal 5'-phosphate is required as a cofactor.

The enzyme catalyses L-histidinol phosphate + 2-oxoglutarate = 3-(imidazol-4-yl)-2-oxopropyl phosphate + L-glutamate. The protein operates within amino-acid biosynthesis; L-histidine biosynthesis; L-histidine from 5-phospho-alpha-D-ribose 1-diphosphate: step 7/9. This Ruegeria sp. (strain TM1040) (Silicibacter sp.) protein is Histidinol-phosphate aminotransferase.